The sequence spans 389 residues: Large ribosomal subunit protein uL3 (389 aa).

Residues 1–36 (MSHRKFEHPRHGSLGFLPRKRSSRHRGKVKSFPKDD) are disordered. The span at 18–31 (PRKRSSRHRGKVKS) shows a compositional bias: basic residues.

This sequence belongs to the universal ribosomal protein uL3 family.

It localises to the cytoplasm. In terms of biological role, the L3 protein is a component of the large subunit of cytoplasmic ribosomes. In Oryza sativa subsp. japonica (Rice), this protein is Large ribosomal subunit protein uL3 (RPL3).